A 1553-amino-acid polypeptide reads, in one-letter code: Probable serine/threonine-protein kinase qkgA (1553 aa).

The segment at Ser113–His142 is disordered. LRR repeat units follow at residues Asn287 to Cys309, Gln311 to Lys333, Phe334 to Thr356, and Leu357 to Leu378. The Roc domain occupies Ser395 to Ser619. 3 disordered regions span residues Asn643–Gln696, Ile955–Gln1019, and Asn1048–Lys1090. Composition is skewed to low complexity over residues Ser648–Lys675, Ser683–Gln696, Ser956–Ser1018, and Thr1059–Lys1090. Positions Gln694–Leu893 constitute a COR domain. In terms of domain architecture, Protein kinase spans Ile1242–Leu1546. ATP contacts are provided by residues Ile1248–Ile1256 and Lys1271. Asp1393 functions as the Proton acceptor in the catalytic mechanism.

This sequence belongs to the protein kinase superfamily. TKL Ser/Thr protein kinase family. ROCO subfamily.

The enzyme catalyses L-seryl-[protein] + ATP = O-phospho-L-seryl-[protein] + ADP + H(+). The catalysed reaction is L-threonyl-[protein] + ATP = O-phospho-L-threonyl-[protein] + ADP + H(+). Involved in growth, and during development, in aggregation. This Dictyostelium discoideum (Social amoeba) protein is Probable serine/threonine-protein kinase qkgA (qkgA-1).